The chain runs to 141 residues: Single-stranded DNA-binding protein 2 (141 aa).

Residues 1–104 form the SSB domain; it reads MLNRTVLVGR…VVADSVQFLE (104 aa). The segment at 104–141 is disordered; the sequence is EPKNNNQQQNNNYQQQRQTQTGNNPFDNNADSIEDLPF. The span at 107–127 shows a compositional bias: low complexity; it reads NNNQQQNNNYQQQRQTQTGNN.

As to quaternary structure, homotetramer.

The polypeptide is Single-stranded DNA-binding protein 2 (ssb-p) (Staphylococcus aureus (strain Mu50 / ATCC 700699)).